We begin with the raw amino-acid sequence, 312 residues long: Porphobilinogen deaminase (312 aa).

Cys-241 is modified (S-(dipyrrolylmethanemethyl)cysteine).

Belongs to the HMBS family. Monomer. Dipyrromethane is required as a cofactor.

The catalysed reaction is 4 porphobilinogen + H2O = hydroxymethylbilane + 4 NH4(+). It participates in porphyrin-containing compound metabolism; protoporphyrin-IX biosynthesis; coproporphyrinogen-III from 5-aminolevulinate: step 2/4. Its pathway is porphyrin-containing compound metabolism; chlorophyll biosynthesis. Functionally, tetrapolymerization of the monopyrrole PBG into the hydroxymethylbilane pre-uroporphyrinogen in several discrete steps. This Chlorobaculum parvum (strain DSM 263 / NCIMB 8327) (Chlorobium vibrioforme subsp. thiosulfatophilum) protein is Porphobilinogen deaminase (hemC).